The primary structure comprises 91 residues: Large ribosomal subunit protein bL27 (91 aa).

Residues 1–24 (MAHKKGVGSSRNGRDSNPKMRGVK) form a disordered region.

Belongs to the bacterial ribosomal protein bL27 family.

This is Large ribosomal subunit protein bL27 from Chloroflexus aggregans (strain MD-66 / DSM 9485).